A 96-amino-acid polypeptide reads, in one-letter code: Co-chaperonin GroES (96 aa).

It belongs to the GroES chaperonin family. In terms of assembly, heptamer of 7 subunits arranged in a ring. Interacts with the chaperonin GroEL.

The protein localises to the cytoplasm. In terms of biological role, together with the chaperonin GroEL, plays an essential role in assisting protein folding. The GroEL-GroES system forms a nano-cage that allows encapsulation of the non-native substrate proteins and provides a physical environment optimized to promote and accelerate protein folding. GroES binds to the apical surface of the GroEL ring, thereby capping the opening of the GroEL channel. In Legionella pneumophila (strain Paris), this protein is Co-chaperonin GroES.